Reading from the N-terminus, the 537-residue chain is MLGRPVFGLGKAITSVDVAVIDANSEWIGVKRLQLMENAGRSVAEEAAKLAKPGSRVVVFAGPGGNGGDGLVAARHLAYMGYQVTVVMIVKPEEIRSPETRAMYEALAAMDLTVDIRIARAPADVAPVEADVVIDALLGTGLRGAPRPPYSDAIEAVNSSTGLKLAVDVPSGLNSDTGETPGAYVKADITVTFHKPKPGLLRRPDVAGRLVVVSIGAPPEAEVYVGPGDVAYRVRPRSWKAHKGSSGRVLIVGGSQDYVGAPILAALAAERSGVDLVFLAAPEHVTRAASHHPTIIPVPLRGSPNIHPDHVKKLEQLLDRVDAIAIGMGVGLSDETKEAIPQIIVKALEKEKPVVVDADGIKILGERGIPNSNRKLVVTPHQREFQILFGDALSGVDEDIKARALKAAEKAQRHGLVILLKGPIDIVTDGERIRLNRTGVPAMSVGGTGDTLAGITAALLARKLEPFHAASIAAFVNGLAGALAYAEKKDSMTAMDLIEKIPEALNNPIEAANRVPAYQRLVRGRIEWQPPVGRSES.

An NAD(P)H-hydrate epimerase region spans residues M1–P227. One can recognise a YjeF N-terminal domain in the interval I13 to V223. The interval G65–D69 is NADPHX 1; for epimerase activity. K(+) contacts are provided by N66 and D135. The tract at residues G139 to A145 is NADPHX 1; for epimerase activity. (6S)-NADPHX is bound by residues Y150 and D168. Residue S171 coordinates K(+). One can recognise a YjeF C-terminal domain in the interval G226 to P508. The ADP-dependent (S)-NAD(P)H-hydrate dehydratase stretch occupies residues P227–S537. Residue G329 participates in (6S)-NADPHX binding. The tract at residues H381 to I387 is NADPHX 2; for dehydratase activity. Residues K421–D425 and V440–G449 contribute to the ADP site. Residue D450 coordinates (6S)-NADPHX.

In the N-terminal section; belongs to the NnrE/AIBP family. This sequence in the C-terminal section; belongs to the NnrD/CARKD family. It depends on K(+) as a cofactor.

The catalysed reaction is (6S)-NADHX + ADP = AMP + phosphate + NADH + H(+). It catalyses the reaction (6S)-NADPHX + ADP = AMP + phosphate + NADPH + H(+). The enzyme catalyses (6R)-NADHX = (6S)-NADHX. It carries out the reaction (6R)-NADPHX = (6S)-NADPHX. Functionally, bifunctional enzyme that catalyzes the epimerization of the S- and R-forms of NAD(P)HX and the dehydration of the S-form of NAD(P)HX at the expense of ADP, which is converted to AMP. This allows the repair of both epimers of NAD(P)HX, a damaged form of NAD(P)H that is a result of enzymatic or heat-dependent hydration. The protein is Bifunctional NAD(P)H-hydrate repair enzyme Nnr (nnr) of Hyperthermus butylicus (strain DSM 5456 / JCM 9403 / PLM1-5).